Reading from the N-terminus, the 365-residue chain is Mitogen-activated protein kinase 13 (365 aa).

In terms of domain architecture, Protein kinase spans 25–308 (YVSPTHVGSG…AAQALTHPFF (284 aa)). Position 31–39 (31–39 (VGSGAYGSV)) interacts with ATP. S47 bears the Phosphoserine mark. Residue K54 participates in ATP binding. D150 (proton acceptor) is an active-site residue. T180 is subject to Phosphothreonine; by MAP2K3, MAP2K4, MAP2K6 and MAP2K7. The short motif at 180–182 (TGY) is the TXY element. Residue Y182 is modified to Phosphotyrosine; by MAP2K3, MAP2K4, MAP2K6 and MAP2K7. Position 350 is a phosphoserine (S350).

Belongs to the protein kinase superfamily. CMGC Ser/Thr protein kinase family. MAP kinase subfamily. Interacts with MAPK8IP2. Mg(2+) is required as a cofactor. Dually phosphorylated on Thr-180 and Tyr-182 by MAP2K3/MKK3, MAP2K4/MKK4, MAP2K6/MKK6 and MAP2K7/MKK7, which activates the enzyme. Dephosphorylated by dual specificity phosphatase DUSP1. As to expression, expressed in testes, pancreas, small intestine, lung and kidney. Abundant in macrophages, also present in neutrophils, CD4+ T-cells, and endothelial cells.

The catalysed reaction is L-seryl-[protein] + ATP = O-phospho-L-seryl-[protein] + ADP + H(+). It catalyses the reaction L-threonyl-[protein] + ATP = O-phospho-L-threonyl-[protein] + ADP + H(+). With respect to regulation, activated by phosphorylation on threonine and tyrosine by dual specificity kinases, MAP2K3/MKK3, MAP2K6/MKK6, MAP2K4/MKK4 and MAP2K7/MKK7. Activation by ultraviolet radiation, hyperosmotic shock, anisomycin or by TNF-alpha is mediated by MAP2K3/MKK3. Inhibited by dual specificity phosphatase DUSP1. Functionally, serine/threonine kinase which acts as an essential component of the MAP kinase signal transduction pathway. MAPK13 is one of the four p38 MAPKs which play an important role in the cascades of cellular responses evoked by extracellular stimuli such as pro-inflammatory cytokines or physical stress leading to direct activation of transcription factors such as ELK1 and ATF2. Accordingly, p38 MAPKs phosphorylate a broad range of proteins and it has been estimated that they may have approximately 200 to 300 substrates each. MAPK13 is one of the less studied p38 MAPK isoforms. Some of the targets are downstream kinases such as MAPKAPK2, which are activated through phosphorylation and further phosphorylate additional targets. Plays a role in the regulation of protein translation by phosphorylating and inactivating EEF2K. Involved in cytoskeletal remodeling through phosphorylation of MAPT and STMN1. Mediates UV irradiation induced up-regulation of the gene expression of CXCL14. Plays an important role in the regulation of epidermal keratinocyte differentiation, apoptosis and skin tumor development. Phosphorylates the transcriptional activator MYB in response to stress which leads to rapid MYB degradation via a proteasome-dependent pathway. MAPK13 also phosphorylates and down-regulates PRKD1 during regulation of insulin secretion in pancreatic beta cells. This is Mitogen-activated protein kinase 13 (MAPK13) from Homo sapiens (Human).